Consider the following 247-residue polypeptide: 5'-nucleotidase SurE (247 aa).

Asp8, Asp9, Ser39, and Asn91 together coordinate a divalent metal cation.

It belongs to the SurE nucleotidase family. A divalent metal cation is required as a cofactor.

The protein localises to the cytoplasm. The enzyme catalyses a ribonucleoside 5'-phosphate + H2O = a ribonucleoside + phosphate. In terms of biological role, nucleotidase that shows phosphatase activity on nucleoside 5'-monophosphates. This is 5'-nucleotidase SurE from Azoarcus sp. (strain BH72).